The sequence spans 227 residues: 7-cyano-7-deazaguanine synthase (227 aa).

9–19 (LSGGLDSATVL) is an ATP binding site. Residues cysteine 189, cysteine 199, cysteine 202, and cysteine 205 each coordinate Zn(2+).

It belongs to the QueC family. It depends on Zn(2+) as a cofactor.

The enzyme catalyses 7-carboxy-7-deazaguanine + NH4(+) + ATP = 7-cyano-7-deazaguanine + ADP + phosphate + H2O + H(+). The protein operates within purine metabolism; 7-cyano-7-deazaguanine biosynthesis. Its function is as follows. Catalyzes the ATP-dependent conversion of 7-carboxy-7-deazaguanine (CDG) to 7-cyano-7-deazaguanine (preQ(0)). This Cupriavidus taiwanensis (strain DSM 17343 / BCRC 17206 / CCUG 44338 / CIP 107171 / LMG 19424 / R1) (Ralstonia taiwanensis (strain LMG 19424)) protein is 7-cyano-7-deazaguanine synthase.